The primary structure comprises 230 residues: MKRGKKYLESLKLYDKTQQYSSDEAIDIVLKTAKANFDETIDLAVRLGVDPRHADQQVRGTVVLPHGTGKSVKVLVFAKGEKAKEAEAAGADYVGAEELVAKIQNENWFDYDVVVATPDMMGVVGRLGKILGPKGLMPNPKSGTVTFDLEKAIKEIKAGKIEYRVDKAGIIHVPIGKKSFGKEKLLENFRAVMDAIIKSKPAAAKGQYIKSVVLSSTMGPGVKVNPLKIF.

It belongs to the universal ribosomal protein uL1 family. In terms of assembly, part of the 50S ribosomal subunit.

Its function is as follows. Binds directly to 23S rRNA. The L1 stalk is quite mobile in the ribosome, and is involved in E site tRNA release. In terms of biological role, protein L1 is also a translational repressor protein, it controls the translation of the L11 operon by binding to its mRNA. This Thermoanaerobacter sp. (strain X514) protein is Large ribosomal subunit protein uL1.